The primary structure comprises 1480 residues: Cystic fibrosis transmembrane conductance regulator (1480 aa).

Topologically, residues 1-77 (MQRSPLEKAS…KLINALRRCF (77 aa)) are cytoplasmic. Residues 78–98 (FWRFMFYGIFLYLGEVTKAVQ) traverse the membrane as a helical segment. The ABC transmembrane type-1 1 domain maps to 81–365 (FMFYGIFLYL…WAVQTWYDSL (285 aa)). Residues 99–122 (PLLLGRIIASYDPDNKEERSIAIY) lie on the Extracellular side of the membrane. Residues 123 to 146 (LGIGLCLLFIVRTLLLHPAIFGLH) traverse the membrane as a helical segment. The Cytoplasmic segment spans residues 147-195 (HIGMQMRIAMFSLIYKKTLKLSSRVLDKISIGQLVSLLSNNLNKFDEGL). Residues 196-216 (ALAHFVWIAPLQVALLMGLIW) traverse the membrane as a helical segment. Over 217–222 (ELLQAS) the chain is Extracellular. The chain crosses the membrane as a helical span at residues 223–243 (AFCGLGFLIVLALFQAGLGRM). Residues 244 to 298 (MMKYRDQRAGKISERLVITSEMIENIQSVKAYCWEEAMEKMIENLRQTELKLTRK) lie on the Cytoplasmic side of the membrane. Residues 299 to 319 (AAYVRYFNSSAFFFSGFFVVF) form a helical membrane-spanning segment. Over 320-339 (LSVLPYALIKGIVLRKIFTT) the chain is Extracellular. A helical membrane pass occupies residues 340–358 (ISFCIVLRMAVTRQFPWAV). Residues 359–858 (QTWYDSLGAI…YLRYITVHKS (500 aa)) are Cytoplasmic-facing. ATP-binding positions include W401, S434, 458–465 (GSTGAGKT), and Q493. An ABC transporter 1 domain is found at 423–646 (NGDDSLFFSN…RPDFSSKLMG (224 aa)). C524 carries the S-palmitoyl cysteine lipid modification. S549 and S660 each carry phosphoserine. A disordered R region region spans residues 654–831 (SAERRNSILT…EEINEEDLKE (178 aa)). Residue S670 is modified to Phosphoserine; by PKA. S686 carries the post-translational modification Phosphoserine. Residue K688 forms a Glycyl lysine isopeptide (Lys-Gly) (interchain with G-Cter in ubiquitin) linkage. A phosphoserine mark is found at S700 and S712. T717 carries the post-translational modification Phosphothreonine. 6 positions are modified to phosphoserine: S737, S753, S768, S790, S795, and S813. The chain crosses the membrane as a helical span at residues 859–879 (LIFVLIWCLVIFLAEVAASLV). An ABC transmembrane type-1 2 domain is found at 859 to 1155 (LIFVLIWCLV…AVNSSIDVDS (297 aa)). The Extracellular segment spans residues 880-918 (VLWLLGNTPLQDKGNSTHSRNNSYAVIITSTSSYYVFYI). Residues N894 and N900 are each glycosylated (N-linked (GlcNAc...) asparagine). The chain crosses the membrane as a discontinuously helical span at residues 919–939 (YVGVADTLLAMGFFRGLPLVH). Over 940-990 (TLITVSKILHHKMLHSVLQAPMSTLNTLKAGGILNRFSKDIAILDDLLPLT) the chain is Cytoplasmic. The chain crosses the membrane as a helical span at residues 991–1011 (IFDFIQLLLIVIGAIAVVAVL). Residues 1012 to 1013 (QP) are Extracellular-facing. A helical membrane pass occupies residues 1014–1034 (YIFVATVPVIVAFIMLRAYFL). Topologically, residues 1035-1095 (QTSQQLKQLE…TANWFLYLST (61 aa)) are cytoplasmic. Residues 1096–1116 (LRWFQMRIEMIFVMFFIAVTF) traverse the membrane as a helical segment. The Extracellular segment spans residues 1117–1130 (ISILTTGEGEGRIG). The chain crosses the membrane as a helical span at residues 1131-1151 (IILTLAMNIMSTLQWAVNSSI). Residues 1152 to 1480 (DVDSLMRSVS…TEEEVQDTRL (329 aa)) lie on the Cytoplasmic side of the membrane. The ABC transporter 2 domain maps to 1210–1443 (MTVKDLSAKY…RSLFRQAISP (234 aa)). Residues Y1219 and 1244–1251 (GRTGSGKS) each bind ATP. An interaction with GORASP2 region spans residues 1386-1480 (RTLKQAFADC…TEEEVQDTRL (95 aa)). The S-palmitoyl cysteine moiety is linked to residue C1395. 2 positions are modified to phosphoserine: S1444 and S1456. Residues 1451-1480 (PHRNSSKGKSQPQIAALKEETEEEVQDTRL) form a disordered region. A compositionally biased stretch (acidic residues) spans 1470 to 1480 (ETEEEVQDTRL). The short motif at 1478–1480 (TRL) is the PDZ-binding element.

This sequence belongs to the ABC transporter superfamily. ABCC family. CFTR transporter (TC 3.A.1.202) subfamily. Monomer; does not require oligomerization for channel activity. May form oligomers in the membrane. Interacts with SLC26A3, SLC26A6 and NHERF1. Interacts with SHANK2. Interacts with MYO6. Interacts (via C-terminus) with GOPC (via PDZ domain); this promotes CFTR internalization and thereby decreases channel activity. Interacts with SLC4A7 through NHERF1. Found in a complex with MYO5B and RAB11A. Interacts with ANO1. Interacts with SLC26A8. Interacts with AHCYL1; the interaction increases CFTR activity. Interacts with CSE1L. The core-glycosylated form interacts with GORASP2 (via PDZ GRASP-type 1 domain) in respone to ER stress. Interacts with MARCHF2; the interaction leads to CFTR ubiqtuitination and degradation. Interacts with ADGRG2. N-glycosylated. In terms of processing, phosphorylated; cAMP treatment promotes phosphorylation and activates the channel. Dephosphorylation decreases the ATPase activity (in vitro). Phosphorylation at PKA sites activates the channel. Phosphorylation at PKC sites enhances the response to phosphorylation by PKA. Phosphorylated by AMPK; this inhibits channel activity. Post-translationally, ubiquitinated, leading to its degradation in the lysosome. Deubiquitination by USP10 in early endosomes enhances its endocytic recycling to the cell membrane. Ubiquitinated by RNF185 during ER stress. Ubiquitinated by MARCHF2.

It localises to the apical cell membrane. The protein localises to the early endosome membrane. It is found in the cell membrane. The protein resides in the recycling endosome membrane. Its subcellular location is the endoplasmic reticulum membrane. It localises to the nucleus. It catalyses the reaction ATP + H2O + closed Cl(-) channel = ADP + phosphate + open Cl(-) channel.. The catalysed reaction is chloride(in) = chloride(out). It carries out the reaction hydrogencarbonate(in) = hydrogencarbonate(out). The enzyme catalyses ATP + H2O = ADP + phosphate + H(+). In terms of biological role, epithelial ion channel that plays an important role in the regulation of epithelial ion and water transport and fluid homeostasis. Mediates the transport of chloride ions across the cell membrane. Possesses an intrinsic ATPase activity and utilizes ATP to gate its channel; the passive flow of anions through the channel is gated by cycles of ATP binding and hydrolysis by the ATP-binding domains. The ion channel is also permeable to HCO(3)(-); selectivity depends on the extracellular chloride concentration. Exerts its function also by modulating the activity of other ion channels and transporters. Contributes to the regulation of the pH and the ion content of the epithelial fluid layer. Modulates the activity of the epithelial sodium channel (ENaC) complex, in part by regulating the cell surface expression of the ENaC complex. May regulate bicarbonate secretion and salvage in epithelial cells by regulating the transporter SLC4A7. Can inhibit the chloride channel activity of ANO1. Plays a role in the chloride and bicarbonate homeostasis during sperm epididymal maturation and capacitation. This Nomascus leucogenys (Northern white-cheeked gibbon) protein is Cystic fibrosis transmembrane conductance regulator.